We begin with the raw amino-acid sequence, 420 residues long: Probable ABC transporter-binding protein DR_1438 (420 aa).

The N-terminal stretch at 1–24 (MKKFAAVLGLTVAFAAASQAHAVT) is a signal peptide.

The protein belongs to the bacterial solute-binding protein 1 family.

Probably part of a binding-protein-dependent transport system. This is Probable ABC transporter-binding protein DR_1438 from Deinococcus radiodurans (strain ATCC 13939 / DSM 20539 / JCM 16871 / CCUG 27074 / LMG 4051 / NBRC 15346 / NCIMB 9279 / VKM B-1422 / R1).